Here is a 434-residue protein sequence, read N- to C-terminus: Ribonuclease T2-like (434 aa).

Residues 1-18 form the signal peptide; sequence MLLKNLHSLLQLPIFSNG. Disulfide bonds link cysteine 27/cysteine 46, cysteine 35/cysteine 94, cysteine 45/cysteine 171, cysteine 102/cysteine 163, and cysteine 241/cysteine 277. 2 N-linked (GlcNAc...) asparagine glycosylation sites follow: asparagine 37 and asparagine 70. The active site involves histidine 87. Asparagine 103 and asparagine 123 each carry an N-linked (GlcNAc...) asparagine glycan. Catalysis depends on residues glutamate 156 and histidine 160.

Belongs to the RNase T2 family. N-glycosylated.

The protein localises to the vacuole lumen. The protein resides in the cytoplasm. It catalyses the reaction a ribonucleotidyl-ribonucleotide-RNA + H2O = a 3'-end 3'-phospho-ribonucleotide-RNA + a 5'-end dephospho-ribonucleoside-RNA + H(+). Its function is as follows. Rnase which modulates cell survival under stress conditions. Released from the vacuole to the cytoplasm during stress to promote tRNA and rRNA cleavage and to activate separately a downstream pathway that promotes cell death. Involved in cell size, vacuolar morphology and growth at high temperatures and high salt concentration. This Saccharomyces cerevisiae (strain ATCC 204508 / S288c) (Baker's yeast) protein is Ribonuclease T2-like (RNY1).